Reading from the N-terminus, the 470-residue chain is Neuraminidase (470 aa).

At 1 to 6 (MNPNQK) the chain is on the intravirion side. Residues 7–27 (IICISATGMTLSVVSLLIGIA) traverse the membrane as a helical segment. The involved in apical transport and lipid raft association stretch occupies residues 11–33 (SATGMTLSVVSLLIGIANLGLNI). The Virion surface segment spans residues 28–470 (NLGLNIGLHY…HDGAEIIYFK (443 aa)). The hypervariable stalk region stretch occupies residues 36–88 (HYKVGDTPDVNIPNVNRTNSTTTIINNNTQNNFTNITNIIQNKNEERTFLNLT). 6 N-linked (GlcNAc...) asparagine; by host glycosylation sites follow: Asn51, Asn54, Asn62, Asn67, Asn70, and Asn86. Residues 91–470 (LCEVNSWHIL…HDGAEIIYFK (380 aa)) form a head of neuraminidase region. Cystine bridges form between Cys92/Cys419, Cys124/Cys129, Cys184/Cys231, Cys233/Cys238, Cys279/Cys292, Cys281/Cys290, Cys319/Cys337, and Cys423/Cys449. Arg118 lines the substrate pocket. Asn146 carries an N-linked (GlcNAc...) asparagine; by host glycan. The Proton donor/acceptor role is filled by Asp151. Arg152 is a binding site for substrate. The N-linked (GlcNAc...) asparagine; by host glycan is linked to Asn201. Residue 277 to 278 (EE) participates in substrate binding. Arg293 serves as a coordination point for substrate. Residues Asp294, Gly298, and Asp325 each coordinate Ca(2+). Arg372 lines the substrate pocket. Asn402 is a glycosylation site (N-linked (GlcNAc...) asparagine; by host). The active-site Nucleophile is Tyr406.

This sequence belongs to the glycosyl hydrolase 34 family. In terms of assembly, homotetramer. Ca(2+) is required as a cofactor. In terms of processing, N-glycosylated.

The protein resides in the virion membrane. The protein localises to the host apical cell membrane. It carries out the reaction Hydrolysis of alpha-(2-&gt;3)-, alpha-(2-&gt;6)-, alpha-(2-&gt;8)- glycosidic linkages of terminal sialic acid residues in oligosaccharides, glycoproteins, glycolipids, colominic acid and synthetic substrates.. Its activity is regulated as follows. Inhibited by the neuraminidase inhibitors zanamivir (Relenza) and oseltamivir (Tamiflu). These drugs interfere with the release of progeny virus from infected cells and are effective against all influenza strains. Resistance to neuraminidase inhibitors is quite rare. Functionally, catalyzes the removal of terminal sialic acid residues from viral and cellular glycoconjugates. Cleaves off the terminal sialic acids on the glycosylated HA during virus budding to facilitate virus release. Additionally helps virus spread through the circulation by further removing sialic acids from the cell surface. These cleavages prevent self-aggregation and ensure the efficient spread of the progeny virus from cell to cell. Otherwise, infection would be limited to one round of replication. Described as a receptor-destroying enzyme because it cleaves a terminal sialic acid from the cellular receptors. May facilitate viral invasion of the upper airways by cleaving the sialic acid moieties on the mucin of the airway epithelial cells. Likely to plays a role in the budding process through its association with lipid rafts during intracellular transport. May additionally display a raft-association independent effect on budding. Plays a role in the determination of host range restriction on replication and virulence. Sialidase activity in late endosome/lysosome traffic seems to enhance virus replication. The chain is Neuraminidase from Aves (Pig).